We begin with the raw amino-acid sequence, 250 residues long: Menaquinol:cytochrome c reductase cytochrome c subunit (250 aa).

Transmembrane regions (helical) follow at residues 46-62 (WLVG…LTVA), 104-124 (VIGA…APFL), and 137-157 (VATG…WESV). A Cytochrome c domain is found at 178–250 (DTNAEGYKIA…LQKMANSSPA (73 aa)). Heme c-binding residues include Cys-192, Cys-195, and His-196. The disordered stretch occupies residues 229–250 (MPGGIFKGTDEELQKMANSSPA).

The protein belongs to the cytochrome b family. In terms of assembly, the main subunits of the menaquinol:cytochrome c complex are a Rieske-type iron-sulfur protein (QcrA), a cytochrome b (QcrB) and a cytochrome c (QcrC). The cofactor is heme c.

Its subcellular location is the cell membrane. In terms of biological role, component of the menaquinol:cytochrome c reductase complex. The protein is Menaquinol:cytochrome c reductase cytochrome c subunit (qcrC) of Geobacillus thermodenitrificans.